A 362-amino-acid chain; its full sequence is Notoamide biosynthesis cluster protein J' (362 aa).

A signal peptide spans 1–22 (MRNMATMLHLLTLILLTSPAST). N-linked (GlcNAc...) asparagine glycans are attached at residues Asn-157, Asn-190, Asn-280, and Asn-338.

Its function is as follows. Part of the gene cluster that mediates the biosynthesis of notoamide, a fungal indole alkaloid that belongs to a family of natural products containing a characteristic bicyclo[2.2.2]diazaoctane core. The first step of notoamide biosynthesis involves coupling of L-proline and L-tryptophan by the bimodular NRPS notE', to produce cyclo-L-tryptophan-L-proline called brevianamide F. The reverse prenyltransferase notF' then acts as a deoxybrevianamide E synthase and converts brevianamide F to deoxybrevianamide E via reverse prenylation at C-2 of the indole ring leading to the bicyclo[2.2.2]diazaoctane core. Deoxybrevianamide E is further hydroxylated at C-6 of the indole ring, likely catalyzed by the cytochrome P450 monooxygenase notG', to yield 6-hydroxy-deoxybrevianamide E. 6-hydroxy-deoxybrevianamide E is a specific substrate of the prenyltransferase notC' for normal prenylation at C-7 to produce 6-hydroxy-7-prenyl-deoxybrevianamide, also called notoamide S. As the proposed pivotal branching point in notoamide biosynthesis, notoamide S can be diverted to notoamide E through an oxidative pyran ring closure putatively catalyzed by either notH' cytochrome P450 monooxygenase or the notD' FAD-linked oxidoreductase. This step would be followed by an indole 2,3-epoxidation-initiated pinacol-like rearrangement catalyzed by the notB' FAD-dependent monooxygenase leading to the formation of notoamide C and notoamide D. On the other hand notoamide S is converted to notoamide T by notH' (or notD'), a bifunctional oxidase that also functions as the intramolecular Diels-Alderase responsible for generation of (-)-notoamide T. To generate antipodal (+)-notoaminide T, notH (or notD) in Aspergillus strain MF297-2 is expected to catalyze a Diels-Alder reaction leading to the opposite stereochemistry. The remaining oxidoreductase notD' (or notH') likely catalyzes the oxidative pyran ring formation to yield (-)-stephacidin A. The FAD-dependent monooxygenase notI' is highly similar to notB' and is predicted to catalyze a similar conversion from (-)-stephacidin A to (+)-notoamide B via the 2,3-epoxidation of (-)-stephacidin A followed by a pinacol-type rearrangement. Finally, it remains unclear which enzyme could be responsible for the final hydroxylation steps leading to notoamide A and sclerotiamide. The function of notJ' in the notoamide biosynthesis has not been determined yet. The sequence is that of Notoamide biosynthesis cluster protein J' from Aspergillus versicolor.